The following is a 161-amino-acid chain: Protein yippee-like B0546.4 (161 aa).

Positions 14–111 (SLYGCVVCNT…IENANFEKIA (98 aa)) constitute a Yippee domain. Zn(2+) contacts are provided by Cys-18, Cys-21, Cys-74, and Cys-77. Residues 117–161 (PLGEDRQEAPPAPNLEMSRYPLEAEKKSRPQYRTVSVSSSSSAEC) are disordered. Residues 151–161 (VSVSSSSSAEC) are compositionally biased toward low complexity.

Belongs to the yippee family.

The sequence is that of Protein yippee-like B0546.4 from Caenorhabditis elegans.